The sequence spans 193 residues: Ribosome maturation factor RimM (193 aa).

The PRC barrel domain maps to Asp97–Val172. The tract at residues Pro168–Asp193 is disordered. Over residues Gly173–Asp193 the composition is skewed to basic and acidic residues.

This sequence belongs to the RimM family. Binds ribosomal protein uS19.

It localises to the cytoplasm. Functionally, an accessory protein needed during the final step in the assembly of 30S ribosomal subunit, possibly for assembly of the head region. Essential for efficient processing of 16S rRNA. May be needed both before and after RbfA during the maturation of 16S rRNA. It has affinity for free ribosomal 30S subunits but not for 70S ribosomes. This is Ribosome maturation factor RimM from Caulobacter vibrioides (strain ATCC 19089 / CIP 103742 / CB 15) (Caulobacter crescentus).